A 465-amino-acid chain; its full sequence is Ribulose bisphosphate carboxylase large chain (465 aa).

The residue at position 4 (Lys-4) is an N6,N6,N6-trimethyllysine. 2 residues coordinate substrate: Asn-113 and Thr-163. Lys-165 serves as the catalytic Proton acceptor. Lys-167 serves as a coordination point for substrate. 3 residues coordinate Mg(2+): Lys-191, Asp-193, and Glu-194. Residue Lys-191 is modified to N6-carboxylysine. His-284 acts as the Proton acceptor in catalysis. Substrate is bound by residues Arg-285, His-317, and Ser-369.

It belongs to the RuBisCO large chain family. Type I subfamily. As to quaternary structure, heterohexadecamer of 8 large chains and 8 small chains; disulfide-linked. The disulfide link is formed within the large subunit homodimers. Mg(2+) is required as a cofactor. Post-translationally, the disulfide bond which can form in the large chain dimeric partners within the hexadecamer appears to be associated with oxidative stress and protein turnover.

It is found in the plastid. It localises to the chloroplast. The enzyme catalyses 2 (2R)-3-phosphoglycerate + 2 H(+) = D-ribulose 1,5-bisphosphate + CO2 + H2O. It catalyses the reaction D-ribulose 1,5-bisphosphate + O2 = 2-phosphoglycolate + (2R)-3-phosphoglycerate + 2 H(+). Its function is as follows. RuBisCO catalyzes two reactions: the carboxylation of D-ribulose 1,5-bisphosphate, the primary event in carbon dioxide fixation, as well as the oxidative fragmentation of the pentose substrate in the photorespiration process. Both reactions occur simultaneously and in competition at the same active site. The polypeptide is Ribulose bisphosphate carboxylase large chain (Clitoria ternatea (Butterfly pea)).